A 178-amino-acid chain; its full sequence is Translation initiation factor IF-3 (178 aa).

The segment at 1–20 is disordered; it reads MRRPFKTDAPVKDGPRSNRE.

It belongs to the IF-3 family. In terms of assembly, monomer.

It is found in the cytoplasm. In terms of biological role, IF-3 binds to the 30S ribosomal subunit and shifts the equilibrium between 70S ribosomes and their 50S and 30S subunits in favor of the free subunits, thus enhancing the availability of 30S subunits on which protein synthesis initiation begins. This chain is Translation initiation factor IF-3, found in Rhizobium leguminosarum bv. trifolii (strain WSM2304).